The following is a 227-amino-acid chain: 2,3-bisphosphoglycerate-dependent phosphoglycerate mutase (227 aa).

Residues 8-15 (RHGQSIWN), 21-22 (TG), arginine 58, 110-113 (ERYY), lysine 121, 137-138 (RR), and 181-182 (GN) contribute to the substrate site. Histidine 9 acts as the Tele-phosphohistidine intermediate in catalysis. Glutamate 110 serves as the catalytic Proton donor/acceptor.

The protein belongs to the phosphoglycerate mutase family. BPG-dependent PGAM subfamily. Homodimer.

It catalyses the reaction (2R)-2-phosphoglycerate = (2R)-3-phosphoglycerate. It participates in carbohydrate degradation; glycolysis; pyruvate from D-glyceraldehyde 3-phosphate: step 3/5. Catalyzes the interconversion of 2-phosphoglycerate and 3-phosphoglycerate. The polypeptide is 2,3-bisphosphoglycerate-dependent phosphoglycerate mutase (Pseudoalteromonas atlantica (strain T6c / ATCC BAA-1087)).